A 346-amino-acid chain; its full sequence is Very-long-chain 3-oxoacyl-CoA reductase (346 aa).

Residues alanine 23–serine 43 form a helical membrane-spanning segment. NADP(+) contacts are provided by valine 69, aspartate 123, asparagine 150, tyrosine 222, lysine 226, valine 255, and serine 257. Catalysis depends on tyrosine 222, which acts as the Proton donor. Lysine 226 acts as the Lowers pKa of active site Tyr in catalysis.

Belongs to the short-chain dehydrogenases/reductases (SDR) family.

The protein resides in the endoplasmic reticulum membrane. The catalysed reaction is a very-long-chain (3R)-3-hydroxyacyl-CoA + NADP(+) = a very-long-chain 3-oxoacyl-CoA + NADPH + H(+). Its pathway is lipid metabolism; fatty acid biosynthesis. Its function is as follows. Component of the microsomal membrane bound fatty acid elongation system, which produces the 26-carbon very long-chain fatty acids (VLCFA) from palmitate. Catalyzes the reduction of the 3-ketoacyl-CoA intermediate that is formed in each cycle of fatty acid elongation. VLCFAs serve as precursors for ceramide and sphingolipids. The sequence is that of Very-long-chain 3-oxoacyl-CoA reductase from Kluyveromyces lactis (strain ATCC 8585 / CBS 2359 / DSM 70799 / NBRC 1267 / NRRL Y-1140 / WM37) (Yeast).